The chain runs to 187 residues: Large ribosomal subunit protein bL32m (187 aa).

Residues C109, C112, C122, and C125 each coordinate Zn(2+).

Belongs to the bacterial ribosomal protein bL32 family. Component of the mitochondrial ribosome large subunit (39S) which comprises a 16S rRNA and about 50 distinct proteins. In terms of processing, MRPL32 precursor is processed by the m-AAA protease (composed of AFG3L2 and SPG7), which cleaves the N-terminal transit peptide. Cleavage by the m-AAA protease takes place prior to assembly into the large subunit, an essential step for mitochondrial ribosome (mitoribosome) assembly. Proper processing by the m-AAA protease is dependent on the zinc-binding region within the tightly folded C-terminal domain of MRPL32: zinc-dependent folding halts degradation initiated from the N-terminus and triggers the release of mature MRPL32.

It localises to the mitochondrion. Functionally, component of the mitochondrial large ribosomal subunit (mt-LSU). The mitochondrial ribosome (mitoribosome) is a large ribonucleoprotein complex responsible for the synthesis of proteins inside mitochondria. This chain is Large ribosomal subunit protein bL32m (Mrpl32), found in Mus musculus (Mouse).